We begin with the raw amino-acid sequence, 115 residues long: MEKMLLKSTTRHVRIFTAEVVDEELKFHPNKLTLDLDPDNEFIWNEDSLNKINEKFNGLIKERAGKDLDDYELRKIGSEIEGLIKFLLQNGQLSYNPDCRVMNYSMGLPMTNEVL.

This sequence belongs to the complex I NdhM subunit family. In terms of assembly, NDH-1 can be composed of about 15 different subunits; different subcomplexes with different compositions have been identified which probably have different functions.

It is found in the cellular thylakoid membrane. It carries out the reaction a plastoquinone + NADH + (n+1) H(+)(in) = a plastoquinol + NAD(+) + n H(+)(out). The catalysed reaction is a plastoquinone + NADPH + (n+1) H(+)(in) = a plastoquinol + NADP(+) + n H(+)(out). In terms of biological role, NDH-1 shuttles electrons from an unknown electron donor, via FMN and iron-sulfur (Fe-S) centers, to quinones in the respiratory and/or the photosynthetic chain. The immediate electron acceptor for the enzyme in this species is believed to be plastoquinone. Couples the redox reaction to proton translocation, and thus conserves the redox energy in a proton gradient. Cyanobacterial NDH-1 also plays a role in inorganic carbon-concentration. This chain is NAD(P)H-quinone oxidoreductase subunit M, found in Prochlorococcus marinus (strain MIT 9301).